The following is an 882-amino-acid chain: E3 ubiquitin-protein ligase SH3RF3 (882 aa).

The tract at residues 18-42 (AQSEGDEDRPGERRRRRAAATAAGA) is disordered. The RING-type zinc finger occupies 57-98 (CSVCLERLDTTAKVLPCQHTFCRRCLESIVCSRHELRCPECR). Residues 124-159 (RPRAGTSPGGSPPARPIPGQSAAPTLAGGGGGAAGS) are disordered. SH3 domains follow at residues 194–253 (CLLP…CIQP) and 256–319 (HAPP…LNDS). The tract at residues 368–399 (RRVDGKKNTKKRHSFTALSVTHRSSQAASHRH) is disordered. Positions 369–439 (RVDGKKNTKK…APTQDVSSSA (71 aa)) are interaction with RAC1. Ser400 carries the post-translational modification Phosphoserine. Positions 433 to 444 (QDVSSSAGSTPT) are enriched in polar residues. Residues 433-458 (QDVSSSAGSTPTAVPRAASVSGEQGT) form a disordered region. An SH3 3 domain is found at 464–525 (LPLNVYLALY…PGNYVTPVSR (62 aa)). Polar residues-rich tracts occupy residues 575 to 588 (PQAH…SPPT), 596 to 635 (AQPT…NSPS), and 697 to 706 (LSTSSPTNTG). 2 disordered regions span residues 575–664 (PQAH…CPRP) and 693–747 (PIGV…PTHD). The segment covering 708–721 (KLDEKKSEKKEKKS) has biased composition (basic and acidic residues). Ser797 bears the Phosphoserine mark. Residues 823 to 882 (LPRERYRVVVSYPPQSEAEIELKEGDIVFVHKKREDGWYKGTLQRNGRTGLFPGSFVESF) enclose the SH3 4 domain.

This sequence belongs to the SH3RF family. Interacts (via SH3 domain 3) with PAK2. Interacts with RAC1 (GTP-bound form). Post-translationally, autoubiquitinated.

The catalysed reaction is S-ubiquitinyl-[E2 ubiquitin-conjugating enzyme]-L-cysteine + [acceptor protein]-L-lysine = [E2 ubiquitin-conjugating enzyme]-L-cysteine + N(6)-ubiquitinyl-[acceptor protein]-L-lysine.. The protein operates within protein modification; protein ubiquitination. Its function is as follows. Has E3 ubiquitin-protein ligase activity. This chain is E3 ubiquitin-protein ligase SH3RF3 (SH3RF3), found in Homo sapiens (Human).